We begin with the raw amino-acid sequence, 336 residues long: ATP-dependent 6-phosphofructokinase (336 aa).

Residue glycine 11 coordinates ATP. Residue 21 to 25 (RAVVR) coordinates ADP. ATP is bound by residues 72-73 (RY) and 102-105 (GDGS). Aspartate 103 serves as a coordination point for Mg(2+). 125-127 (TID) contacts substrate. Residue aspartate 127 is the Proton acceptor of the active site. Arginine 154 is an ADP binding site. Residues arginine 162 and 169 to 171 (MGR) contribute to the substrate site. ADP contacts are provided by residues 185–187 (GAD), lysine 211, and 213–215 (KKH). Substrate contacts are provided by residues glutamate 222, arginine 244, and 250 to 253 (HIQR).

The protein belongs to the phosphofructokinase type A (PFKA) family. ATP-dependent PFK group I subfamily. Prokaryotic clade 'B1' sub-subfamily. As to quaternary structure, homotetramer. Mg(2+) serves as cofactor.

The protein localises to the cytoplasm. The enzyme catalyses beta-D-fructose 6-phosphate + ATP = beta-D-fructose 1,6-bisphosphate + ADP + H(+). It functions in the pathway carbohydrate degradation; glycolysis; D-glyceraldehyde 3-phosphate and glycerone phosphate from D-glucose: step 3/4. With respect to regulation, allosterically activated by ADP and other diphosphonucleosides, and allosterically inhibited by phosphoenolpyruvate. Functionally, catalyzes the phosphorylation of D-fructose 6-phosphate to fructose 1,6-bisphosphate by ATP, the first committing step of glycolysis. The chain is ATP-dependent 6-phosphofructokinase from Streptococcus suis (strain 05ZYH33).